The primary structure comprises 471 residues: L-amino acid dehydrogenase (471 aa).

Gly31 provides a ligand contact to Mg(2+). Ser33 lines the FAD pocket. Gly34 is a Mg(2+) binding site. Positions 52, 60, and 256 each coordinate FAD. Ala283 lines the Mg(2+) pocket. Phe453 contributes to the FAD binding site.

The protein belongs to the flavin monoamine oxidase family. FAD is required as a cofactor. It depends on Mg(2+) as a cofactor.

It is found in the cellular thylakoid membrane. It carries out the reaction a plastoquinone + an L-alpha-amino acid + H2O = a plastoquinol + a 2-oxocarboxylate + NH4(+). The catalysed reaction is a plastoquinone + L-arginine + H2O = a plastoquinol + 5-guanidino-2-oxopentanoate + NH4(+). The protein operates within amino-acid degradation; L-arginine degradation. Inhibited by Ca(2+) and other cations such as Ni(2+), Co(2+) and Zn(2+). The inhibition by o-phenanthroline and salicylhydroxamic acid suggests the presence of a metal cofactor besides FAD in the enzyme. The L-arginine-stimulated O(2) consumption involving slr0782 is inhibited by inhibitors of the respiratory electron transport chain, such as KCN and 2,5-dibromo-3-methyl-6-isopropyl-p-benzoquinone, which indicates a participation of the cytochrome b6/f complex and of a cytochrome oxidase. Its function is as follows. L-amino acid dehydrogenase with broad substrate specificity. Catalyzes the oxidative deamination of various L-amino acids, L-Arg and L-Cys being the best substrates in vitro. Likely functions mainly as an L-arginine dehydrogenase in vivo. Probably feeds electrons from L-arginine oxidation and also from the oxidation of other L-amino acids into the respiratory electron transport chain associated to the thylakoid membrane, and does not directly interact with molecular oxygen but donates electrons to the plastoquinone pool. Cannot use D-amino acids as substrates. The protein is L-amino acid dehydrogenase of Synechocystis sp. (strain ATCC 27184 / PCC 6803 / Kazusa).